Here is a 183-residue protein sequence, read N- to C-terminus: Bifunctional protein PyrR (183 aa).

The PRPP-binding motif lies at 98-110 (VVLVDDVLYTGRT).

It belongs to the purine/pyrimidine phosphoribosyltransferase family. PyrR subfamily.

The catalysed reaction is UMP + diphosphate = 5-phospho-alpha-D-ribose 1-diphosphate + uracil. In terms of biological role, regulates the transcription of the pyrimidine nucleotide (pyr) operon in response to exogenous pyrimidines. Also displays a weak uracil phosphoribosyltransferase activity which is not physiologically significant. The protein is Bifunctional protein PyrR of Roseiflexus sp. (strain RS-1).